A 112-amino-acid chain; its full sequence is Nucleoid-associated protein FTW_0607 (112 aa).

Positions 1–27 are disordered; that stretch reads MNFDMSKLMQQAQKMQEQMKKAQQERE. A compositionally biased stretch (basic and acidic residues) spans 17–27; that stretch reads EQMKKAQQERE.

Belongs to the YbaB/EbfC family. Homodimer.

The protein resides in the cytoplasm. Its subcellular location is the nucleoid. Its function is as follows. Binds to DNA and alters its conformation. May be involved in regulation of gene expression, nucleoid organization and DNA protection. The polypeptide is Nucleoid-associated protein FTW_0607 (Francisella tularensis subsp. tularensis (strain WY96-3418)).